The primary structure comprises 119 residues: Large ribosomal subunit protein bL20 (119 aa).

This sequence belongs to the bacterial ribosomal protein bL20 family.

Functionally, binds directly to 23S ribosomal RNA and is necessary for the in vitro assembly process of the 50S ribosomal subunit. It is not involved in the protein synthesizing functions of that subunit. This chain is Large ribosomal subunit protein bL20, found in Streptococcus uberis (strain ATCC BAA-854 / 0140J).